Here is a 501-residue protein sequence, read N- to C-terminus: Lysine--tRNA ligase (501 aa).

The Mg(2+) site is built by Glu411 and Glu418.

Belongs to the class-II aminoacyl-tRNA synthetase family. In terms of assembly, homodimer. Mg(2+) is required as a cofactor.

The protein localises to the cytoplasm. The enzyme catalyses tRNA(Lys) + L-lysine + ATP = L-lysyl-tRNA(Lys) + AMP + diphosphate. The protein is Lysine--tRNA ligase of Aliivibrio salmonicida (strain LFI1238) (Vibrio salmonicida (strain LFI1238)).